A 119-amino-acid polypeptide reads, in one-letter code: Large ribosomal subunit protein bL20 (119 aa).

Belongs to the bacterial ribosomal protein bL20 family.

Its function is as follows. Binds directly to 23S ribosomal RNA and is necessary for the in vitro assembly process of the 50S ribosomal subunit. It is not involved in the protein synthesizing functions of that subunit. In Bradyrhizobium diazoefficiens (strain JCM 10833 / BCRC 13528 / IAM 13628 / NBRC 14792 / USDA 110), this protein is Large ribosomal subunit protein bL20.